Reading from the N-terminus, the 158-residue chain is Regulator of sigma D (158 aa).

It belongs to the Rsd/AlgQ family. As to quaternary structure, interacts with RpoD.

It is found in the cytoplasm. In terms of biological role, binds RpoD and negatively regulates RpoD-mediated transcription activation by preventing the interaction between the primary sigma factor RpoD with the catalytic core of the RNA polymerase and with promoter DNA. May be involved in replacement of the RNA polymerase sigma subunit from RpoD to RpoS during the transition from exponential growth to the stationary phase. The polypeptide is Regulator of sigma D (Escherichia coli O6:H1 (strain CFT073 / ATCC 700928 / UPEC)).